Consider the following 129-residue polypeptide: Lysozyme C-3 (129 aa).

One can recognise a C-type lysozyme domain in the interval 1-129; that stretch reads KVYERCELAA…VSRWIRGCRL (129 aa). Cystine bridges form between Cys-6-Cys-127, Cys-30-Cys-115, Cys-64-Cys-80, and Cys-76-Cys-94. Active-site residues include Glu-35 and Asp-52.

Belongs to the glycosyl hydrolase 22 family.

The protein resides in the secreted. The enzyme catalyses Hydrolysis of (1-&gt;4)-beta-linkages between N-acetylmuramic acid and N-acetyl-D-glucosamine residues in a peptidoglycan and between N-acetyl-D-glucosamine residues in chitodextrins.. Lysozymes have primarily a bacteriolytic function; those in tissues and body fluids are associated with the monocyte-macrophage system and enhance the activity of immunoagents. The sequence is that of Lysozyme C-3 from Anas platyrhynchos (Mallard).